The sequence spans 799 residues: DNA ligase (799 aa).

The segment covering 1 to 11 (MTEVKTGRVVD) has biased composition (basic and acidic residues). The interval 1–35 (MTEVKTGRVVDDAPVNDAPENNAAEATSPARHDAI) is disordered. NAD(+) contacts are provided by residues 67–71 (DAEYD), 116–117 (SL), and Asp147. Lys149 acts as the N6-AMP-lysine intermediate in catalysis. Positions 170, 207, 327, and 351 each coordinate NAD(+). Zn(2+) is bound by residues Cys445, Cys448, Cys463, and Cys468. The BRCT domain occupies 634–723 (AIVLPLQGLK…VASVDASEAV (90 aa)). The segment at 720–799 (SEAVAEETPP…RGRAEQLKLF (80 aa)) is disordered. Positions 755 to 767 (GSASGDDSRGAAA) are enriched in low complexity. The span at 787–799 (DVPRGRAEQLKLF) shows a compositional bias: basic and acidic residues.

Belongs to the NAD-dependent DNA ligase family. LigA subfamily. Requires Mg(2+) as cofactor. Mn(2+) is required as a cofactor.

The catalysed reaction is NAD(+) + (deoxyribonucleotide)n-3'-hydroxyl + 5'-phospho-(deoxyribonucleotide)m = (deoxyribonucleotide)n+m + AMP + beta-nicotinamide D-nucleotide.. Functionally, DNA ligase that catalyzes the formation of phosphodiester linkages between 5'-phosphoryl and 3'-hydroxyl groups in double-stranded DNA using NAD as a coenzyme and as the energy source for the reaction. It is essential for DNA replication and repair of damaged DNA. The polypeptide is DNA ligase (Nitratidesulfovibrio vulgaris (strain ATCC 29579 / DSM 644 / CCUG 34227 / NCIMB 8303 / VKM B-1760 / Hildenborough) (Desulfovibrio vulgaris)).